Here is a 111-residue protein sequence, read N- to C-terminus: Ig kappa chain V-III region PC 2880/PC 1229 (111 aa).

The interval 1 to 23 (DIVLTQSPASLAVSLGQRATISC) is framework-1. The cysteines at positions 23 and 92 are disulfide-linked. The interval 24-38 (RASESVDNYGISFMN) is complementarity-determining-1. Residues 39-53 (WFQQKPGQPPKLLIY) are framework-2. The complementarity-determining-2 stretch occupies residues 54-60 (AASNQGS). Residues 61–92 (GVPARFSGSGSGTDFSLNIHPMEEDDTAMYFC) form a framework-3 region. The interval 93–101 (QQSKEVPWT) is complementarity-determining-3. Residues 102-111 (FGGGTKLEIK) form a framework-4 region.

This is Ig kappa chain V-III region PC 2880/PC 1229 from Mus musculus (Mouse).